The following is a 257-amino-acid chain: AN1-type zinc finger protein 2B (257 aa).

2 consecutive AN1-type zinc fingers follow at residues 4–52 (PDLG…QKDI) and 94–142 (KIFT…HPTS). Positions 10, 15, 25, 28, 33, 36, 42, 44, 100, 105, 115, 118, 123, 126, 132, and 134 each coordinate Zn(2+). The tract at residues 141–151 (TSRAGLAAISR) is VCP/p97-interacting motif (VIM). The interval 153 to 187 (QGLASTSTVPSPSRTLPSSSSPSRATPQLPPRTTS) is disordered. The segment covering 156–179 (ASTSTVPSPSRTLPSSSSPSRATP) has biased composition (low complexity). Serine 163, serine 173, and serine 187 each carry phosphoserine. UIM domains lie at 197–216 (SEDEALQRALELSLAEAKPQ) and 221–240 (QEEEDLALAQALSASEAEYQ). At cysteine 254 the chain carries Cysteine methyl ester. Residue cysteine 254 is the site of S-geranylgeranyl cysteine attachment. Residues 254–257 (CSLC) carry the CAAX motif motif. A propeptide spans 255 to 257 (SLC) (removed in mature form).

Binds 'Lys-48'-linked polyubiquitin chains of ubiquitinated proteins. Associates with the proteasome complex; upon exposure to arsenite. Interacts (via VIM motif) with VCP; the interaction is direct. Interacts with BAG6. Interacts with IGF1R (nascent precursor form). Interacts with DERL1, FAF2, NPLOC4 and UFD1; probably through VCP. Post-translationally, phosphorylated by MAPK14. Phosphorylation has no effect on association with the proteasome complex.

Its subcellular location is the endoplasmic reticulum membrane. Functionally, plays a role in protein homeostasis by regulating both the translocation and the ubiquitin-mediated proteasomal degradation of nascent proteins at the endoplasmic reticulum. It is involved in the regulation of signal-mediated translocation of proteins into the endoplasmic reticulum. It also plays a role in the ubiquitin-mediated proteasomal degradation of proteins for which signal-mediated translocation to the endoplasmic reticulum has failed. May therefore function in the endoplasmic reticulum stress-induced pre-emptive quality control, a mechanism that selectively attenuates the translocation of newly synthesized proteins into the endoplasmic reticulum and reroutes them to the cytosol for proteasomal degradation. By controlling the steady-state expression of the IGF1R receptor, indirectly regulates the insulin-like growth factor receptor signaling pathway. In Rattus norvegicus (Rat), this protein is AN1-type zinc finger protein 2B.